The primary structure comprises 213 residues: Urease accessory protein UreG (213 aa).

10–17 (GPVGSGKT) contacts GTP.

It belongs to the SIMIBI class G3E GTPase family. UreG subfamily. Homodimer. UreD, UreF and UreG form a complex that acts as a GTP-hydrolysis-dependent molecular chaperone, activating the urease apoprotein by helping to assemble the nickel containing metallocenter of UreC. The UreE protein probably delivers the nickel.

Its subcellular location is the cytoplasm. In terms of biological role, facilitates the functional incorporation of the urease nickel metallocenter. This process requires GTP hydrolysis, probably effectuated by UreG. This is Urease accessory protein UreG from Deinococcus radiodurans (strain ATCC 13939 / DSM 20539 / JCM 16871 / CCUG 27074 / LMG 4051 / NBRC 15346 / NCIMB 9279 / VKM B-1422 / R1).